We begin with the raw amino-acid sequence, 269 residues long: Regulating synaptic membrane exocytosis protein 4 (269 aa).

Residues 115–233 form the C2 domain; sequence PMGDVEIGLQ…DLTTLAVGWY (119 aa). A phosphoserine mark is found at S254 and S257.

As to quaternary structure, binds PPFIA3. Does not bind RAB3.

The protein localises to the synapse. Its function is as follows. Regulates synaptic membrane exocytosis. The chain is Regulating synaptic membrane exocytosis protein 4 (Rims4) from Mus musculus (Mouse).